We begin with the raw amino-acid sequence, 350 residues long: GTPase Obg (350 aa).

The Obg domain occupies 1-159; the sequence is MKLVDEAEIE…RTLKLELKLL (159 aa). Positions 127–147 are disordered; sequence NMHFKSSTNRSPRQALPGEPG. An OBG-type G domain is found at 160–337; the sequence is ADVGLLGFPN…IMSRIMAFFD (178 aa). GTP contacts are provided by residues 166 to 173, 191 to 195, 213 to 216, 287 to 290, and 318 to 320; these read GFPNAGKS, FTTLY, DIPG, NKAD, and SAL. Residues S173 and T193 each contribute to the Mg(2+) site.

The protein belongs to the TRAFAC class OBG-HflX-like GTPase superfamily. OBG GTPase family. Monomer. Mg(2+) serves as cofactor.

It is found in the cytoplasm. In terms of biological role, an essential GTPase which binds GTP, GDP and possibly (p)ppGpp with moderate affinity, with high nucleotide exchange rates and a fairly low GTP hydrolysis rate. Plays a role in control of the cell cycle, stress response, ribosome biogenesis and in those bacteria that undergo differentiation, in morphogenesis control. This is GTPase Obg from Stenotrophomonas maltophilia (strain R551-3).